Reading from the N-terminus, the 208-residue chain is ATP-dependent Clp protease proteolytic subunit (208 aa).

Ser-106 (nucleophile) is an active-site residue. The active site involves His-131.

This sequence belongs to the peptidase S14 family. As to quaternary structure, fourteen ClpP subunits assemble into 2 heptameric rings which stack back to back to give a disk-like structure with a central cavity, resembling the structure of eukaryotic proteasomes.

It is found in the cytoplasm. It carries out the reaction Hydrolysis of proteins to small peptides in the presence of ATP and magnesium. alpha-casein is the usual test substrate. In the absence of ATP, only oligopeptides shorter than five residues are hydrolyzed (such as succinyl-Leu-Tyr-|-NHMec, and Leu-Tyr-Leu-|-Tyr-Trp, in which cleavage of the -Tyr-|-Leu- and -Tyr-|-Trp bonds also occurs).. Its function is as follows. Cleaves peptides in various proteins in a process that requires ATP hydrolysis. Has a chymotrypsin-like activity. Plays a major role in the degradation of misfolded proteins. The polypeptide is ATP-dependent Clp protease proteolytic subunit (Dinoroseobacter shibae (strain DSM 16493 / NCIMB 14021 / DFL 12)).